A 63-amino-acid chain; its full sequence is MNNKINNIKITQVHSAIGRKYDQRLILVGLGLNKINKSVILANTNSIKGMVNKVKHLLKIENM.

Belongs to the universal ribosomal protein uL30 family. Part of the 50S ribosomal subunit.

In Rickettsia africae (strain ESF-5), this protein is Large ribosomal subunit protein uL30.